Here is a 423-residue protein sequence, read N- to C-terminus: Dihydroorotase (423 aa).

2 residues coordinate Zn(2+): His56 and His58. Residues 58 to 60 and Asn89 each bind substrate; that span reads HFR. Residues Lys137, His168, His227, and Asp302 each contribute to the Zn(2+) site. Lys137 carries the N6-carboxylysine modification. Asp302 is an active-site residue. Residue His306 participates in substrate binding.

The protein belongs to the metallo-dependent hydrolases superfamily. DHOase family. Class I DHOase subfamily. Requires Zn(2+) as cofactor.

The enzyme catalyses (S)-dihydroorotate + H2O = N-carbamoyl-L-aspartate + H(+). It participates in pyrimidine metabolism; UMP biosynthesis via de novo pathway; (S)-dihydroorotate from bicarbonate: step 3/3. In terms of biological role, catalyzes the reversible cyclization of carbamoyl aspartate to dihydroorotate. This is Dihydroorotase from Methanocaldococcus jannaschii (strain ATCC 43067 / DSM 2661 / JAL-1 / JCM 10045 / NBRC 100440) (Methanococcus jannaschii).